Here is a 417-residue protein sequence, read N- to C-terminus: UDP-N-acetylglucosamine 1-carboxyvinyltransferase (417 aa).

23 to 24 (KN) provides a ligand contact to phosphoenolpyruvate. Arginine 93 contributes to the UDP-N-acetyl-alpha-D-glucosamine binding site. Catalysis depends on aspartate 117, which acts as the Proton donor. Residues aspartate 305 and valine 327 each contribute to the UDP-N-acetyl-alpha-D-glucosamine site.

Belongs to the EPSP synthase family. MurA subfamily.

Its subcellular location is the cytoplasm. It catalyses the reaction phosphoenolpyruvate + UDP-N-acetyl-alpha-D-glucosamine = UDP-N-acetyl-3-O-(1-carboxyvinyl)-alpha-D-glucosamine + phosphate. It functions in the pathway cell wall biogenesis; peptidoglycan biosynthesis. Its function is as follows. Cell wall formation. Adds enolpyruvyl to UDP-N-acetylglucosamine. In Mycolicibacterium paratuberculosis (strain ATCC BAA-968 / K-10) (Mycobacterium paratuberculosis), this protein is UDP-N-acetylglucosamine 1-carboxyvinyltransferase.